A 354-amino-acid chain; its full sequence is Ribosomal RNA large subunit methyltransferase M (354 aa).

S-adenosyl-L-methionine-binding positions include Ser183, 216–219, Asp235, Asp255, and Asp271; that span reads SPGG. Lys300 acts as the Proton acceptor in catalysis.

The protein belongs to the class I-like SAM-binding methyltransferase superfamily. RNA methyltransferase RlmE family. RlmM subfamily. As to quaternary structure, monomer.

It is found in the cytoplasm. It catalyses the reaction cytidine(2498) in 23S rRNA + S-adenosyl-L-methionine = 2'-O-methylcytidine(2498) in 23S rRNA + S-adenosyl-L-homocysteine + H(+). Its function is as follows. Catalyzes the 2'-O-methylation at nucleotide C2498 in 23S rRNA. The polypeptide is Ribosomal RNA large subunit methyltransferase M (Pseudomonas putida (strain ATCC 47054 / DSM 6125 / CFBP 8728 / NCIMB 11950 / KT2440)).